The primary structure comprises 352 residues: MRKKAISRILALVVPVLLSLNSQAFATSVQDESPVTGSAVEAVHTVPSTVAAPVAGHAEAAAGQAAKAEEKPGDLIMHHILDNSTFSFEPFGEVHLPHLEVAGFDISITKHVVMIWLAAILLVVIASAAGASVKKMSANQAPKGVANVFESLVDFISNDVAKPNIGHGYEKFLPYLLTVFFFILVCNLLGLIPYGATATGNINVTLTLSVFTFVITQFSAFKAQGVKGYLQHLTAGTHWALWIIMVPIEILGQFTKPFALTIRLFANMTAGHIIILSLFFISFILKSYIVAVAVSIPFAIFIYLLELFVAFLQAYVFTMLSALFIGLATAHSDSHDGHELEATARHGDGLTV.

The first 26 residues, Met-1 to Ala-26, serve as a signal peptide directing secretion. Helical transmembrane passes span Val-112–Ser-132, Phe-172–Ile-192, Gly-195–Ile-215, His-232–Gly-252, Leu-264–Ile-284, Ile-289–Val-309, and Ala-310–Ala-330.

Belongs to the ATPase A chain family. As to quaternary structure, F-type ATPases have 2 components, CF(1) - the catalytic core - and CF(0) - the membrane proton channel. CF(1) has five subunits: alpha(3), beta(3), gamma(1), delta(1), epsilon(1). CF(0) has four main subunits: a, b, b' and c.

Its subcellular location is the cell inner membrane. Key component of the proton channel; it plays a direct role in the translocation of protons across the membrane. In Chlorobaculum tepidum (strain ATCC 49652 / DSM 12025 / NBRC 103806 / TLS) (Chlorobium tepidum), this protein is ATP synthase subunit a 2.